The sequence spans 98 residues: MAATTGLETLVDQIISVITNDGRNIVGVLKGFDQATNIILDESHERVFSTKEGVQQHVLGLYIIRGDNIGVIGELDEELDASLDFSKLRAHPLKPVVH.

The Sm domain maps to 2-78 (AATTGLETLV…IGVIGELDEE (77 aa)).

This sequence belongs to the snRNP Sm proteins family. As to quaternary structure, component of the heptameric LSM2-LSM8 complex that forms a seven-membered ring structure with a donut shape. The LSM subunits are arranged in the order LSM8, LSM2, LSM3, LSM6, LSM5, LSM7 and LSM4. LSM8 subunit interacts only with its two neighboring subunits, LSM2 and LSM4. Interacts with the prefoldin co-chaperone subunits PFD1, PFD2, PFD3, PFD4, PFD5 and PFD6. In terms of tissue distribution, expressed in roots, leaves, stems, flowers and siliques.

Its subcellular location is the nucleus. Component of the nuclear LSM2-LSM8 complex which is involved splicing nuclear mRNAs. LSM2-LSM8 binds directly to the U6 small nuclear RNAs (snRNAs). LSM8 is essential for the formation of the nuclear LSM2-LSM8 complex involved in the accurate splicing of selected development-related mRNAs through the stabilization of the spliceosomal U6 snRNA. Plays a critical role in the regulation of development-related gene expression. The polypeptide is Sm-like protein LSM8 (Arabidopsis thaliana (Mouse-ear cress)).